A 397-amino-acid chain; its full sequence is 1-deoxy-D-xylulose 5-phosphate reductoisomerase (397 aa).

6 residues coordinate NADPH: threonine 10, glycine 11, serine 12, isoleucine 13, glutamine 38, and asparagine 123. Lysine 124 lines the 1-deoxy-D-xylulose 5-phosphate pocket. Glutamate 125 contributes to the NADPH binding site. Aspartate 149 contributes to the Mn(2+) binding site. 1-deoxy-D-xylulose 5-phosphate-binding residues include serine 150, glutamate 151, serine 185, and histidine 208. Glutamate 151 is a binding site for Mn(2+). Position 214 (glycine 214) interacts with NADPH. Residues serine 221, asparagine 226, lysine 227, and glutamate 230 each contribute to the 1-deoxy-D-xylulose 5-phosphate site. Mn(2+) is bound at residue glutamate 230.

It belongs to the DXR family. Mg(2+) serves as cofactor. The cofactor is Mn(2+).

It catalyses the reaction 2-C-methyl-D-erythritol 4-phosphate + NADP(+) = 1-deoxy-D-xylulose 5-phosphate + NADPH + H(+). It participates in isoprenoid biosynthesis; isopentenyl diphosphate biosynthesis via DXP pathway; isopentenyl diphosphate from 1-deoxy-D-xylulose 5-phosphate: step 1/6. In terms of biological role, catalyzes the NADPH-dependent rearrangement and reduction of 1-deoxy-D-xylulose-5-phosphate (DXP) to 2-C-methyl-D-erythritol 4-phosphate (MEP). The polypeptide is 1-deoxy-D-xylulose 5-phosphate reductoisomerase (Idiomarina loihiensis (strain ATCC BAA-735 / DSM 15497 / L2-TR)).